The primary structure comprises 433 residues: Putative ankyrin repeat protein R578 (433 aa).

ANK repeat units lie at residues 166–195 (NKEI…ILSE), 197–224 (DHLI…LSKL), 356–386 (VNPN…DIHS), and 388–415 (PSLI…ICDE).

This Acanthamoeba polyphaga mimivirus (APMV) protein is Putative ankyrin repeat protein R578.